A 341-amino-acid polypeptide reads, in one-letter code: Serpentine receptor class beta-3 (341 aa).

Topologically, residues 1 to 23 are extracellular; it reads MLETNDSVCELAYQLAYHPVYRS. Residue N5 is glycosylated (N-linked (GlcNAc...) asparagine). Residues 24–44 form a helical membrane-spanning segment; sequence SQFWSMLVSSLSIPALIYFIT. At 45–58 the chain is on the cytoplasmic side; the sequence is RKIFFLHFHGNLKC. The helical transmembrane segment at 59–79 threads the bilayer; sequence LLIVYFICNLLFSMALCFAFF. The Extracellular segment spans residues 80–103; the sequence is YQFLIPFFVTSKCQLLINTTLFKW. N-linked (GlcNAc...) asparagine glycosylation is present at N97. The helical transmembrane segment at 104 to 124 threads the bilayer; it reads GQICSFLLLTSSMLLPIGFSI. At 125 to 141 the chain is on the cytoplasmic side; it reads ERFVALGNAQKYESSRT. The helical transmembrane segment at 142 to 162 threads the bilayer; sequence FLGPVIIFIIIAVDFSIIFSV. Residues 163–187 are Extracellular-facing; it reads YKNEPFTEGFYSFILVPSTTASQIN. Residues 188 to 208 form a helical membrane-spanning segment; that stretch reads MYFFVLLFVKIFNLLLNCILL. The Cytoplasmic portion of the chain corresponds to 209–237; the sequence is RIHKKIRIKYYSLSVRYEMEEILQSSKFT. A helical membrane pass occupies residues 238 to 258; it reads FIIRFTHLLFFGFYVVVILFV. Residues 259 to 276 are Extracellular-facing; the sequence is RIMGESFFNGTLNYSVAR. N-linked (GlcNAc...) asparagine glycosylation is found at N267 and N271. Residues 277–297 form a helical membrane-spanning segment; it reads GVFCTVPTYNLIIVIIGIKSL. Over 298–341 the chain is Cytoplasmic; that stretch reads RHLNLQRLNKVQSTVQIKSTGKEGSKNYEDIITNYWDSVSSRTP.

It belongs to the nematode receptor-like protein srb family. As to expression, expressed throughout the head.

It is found in the cell membrane. The protein localises to the perikaryon. It localises to the cell projection. The protein resides in the dendrite. Its function is as follows. G-protein coupled receptor. The chain is Serpentine receptor class beta-3 from Caenorhabditis elegans.